Reading from the N-terminus, the 630-residue chain is Neuronal acetylcholine receptor subunit alpha-4 (630 aa).

The first 30 residues, 1-30 (MANSGTGAPPPLLLLPLLLLLGTGLLPASS), serve as a signal peptide directing secretion. The Extracellular portion of the chain corresponds to 32 to 249 (IETRAHAEER…IIRRLPLFYT (218 aa)). N59 is a glycosylation site (N-linked (GlcNAc...) asparagine). V78 and E80 together coordinate Ca(2+). N109 and N176 each carry an N-linked (GlcNAc...) asparagine glycan. Disulfide bonds link C163–C177 and C227–C228. Residues 250–270 (INLIIPCLLISCLTVLVFYLP) form a helical membrane-spanning segment. C273 is lipidated: S-palmitoyl cysteine. 2 helical membrane-spanning segments follow: residues 279 to 299 (LCIS…EIIP) and 313 to 333 (LLFT…VLNV). Over 334 to 604 (HHRSPRTHTM…WKYVAMVIDR (271 aa)) the chain is Cytoplasmic. 2 disordered regions span residues 418-463 (TAVE…SGAP) and 505-526 (SLAD…SQLP). Position 428 is a phosphoserine (S428). A compositionally biased stretch (basic and acidic residues) spans 434 to 443 (PDLKTSEVEK). Residues 447 to 457 (CPSPGSCPPPK) are compositionally biased toward pro residues. 2 positions are modified to phosphoserine: S542 and S545. Residues 605–625 (IFLWMFIIVCLLGTVGLFLPP) traverse the membrane as a helical segment.

The protein belongs to the ligand-gated ion channel (TC 1.A.9) family. Acetylcholine receptor (TC 1.A.9.1) subfamily. Alpha-4/CHRNA4 sub-subfamily. Neuronal AChR is composed of two different types of subunits: alpha and beta. CHRNA4 forms heteropentameric neuronal acetylcholine receptors with CHRNB2 and CHRNB4, as well as CHRNA5 and CHRNB3 as accesory subunits. Found in two major stoichiometric forms, LS (low agonist sensitivity): (CHRNA4)3:(CHRNB2)2 and HS (high agonist sensitivity): (CHRNA4)2:(CHRNB2)3, the two stoichiometric forms differ in their unitary conductance, calcium permeability, ACh sensitivity and potentiation by divalent cation. Cells produce predominantly an (CHRNA4)3:(CHRNB2)2 nAChR. The (CHRNA4)2:(CHRNB2)3 expression is selectively up-regulated by nicotine and has lower single channel conductance and calcium permeability. In the striatum, also forms CHRNA4:CHRNA6:CHRNB2 complexes. Also found in the stoichiometric form: (CHRNA4:CHRNB2)2:CHRNB3. Interacts with RIC3; which is required for proper folding and assembly. Interacts with LYPD6. As to expression, in various regions of the central nervous system. Expressed in hippocampal neurons.

The protein localises to the presynaptic cell membrane. It localises to the cell membrane. It catalyses the reaction Ca(2+)(in) = Ca(2+)(out). It carries out the reaction K(+)(in) = K(+)(out). The catalysed reaction is Na(+)(in) = Na(+)(out). With respect to regulation, activated by a myriad of ligands such as acetylcholine, cytisine, nicotine, choline and epibatidine. Channel potentiation by calcium is stoichiometry-selective, CHRNA4:CHRNB2 nACh receptor is achieved by calcium association with topographically distinct sites framed by anionic residues within the CHRNA4 subunit and between the CHRNA4 and CHRNB2 subunits. nAChR activity is inhibited by the antagonist alpha-conotoxins BuIA, PnIA, GID and MII, small disulfide-constrained peptides from cone snails. Its function is as follows. Component of neuronal acetylcholine receptors (nAChRs) that function as pentameric, ligand-gated cation channels with high calcium permeability among other activities. nAChRs are excitatory neurotrasnmitter receptors formed by a collection of nAChR subunits known to mediate synaptic transmission in the nervous system and the neuromuscular junction. Each nAchR subunit confers differential attributes to channel properties, including activation, deactivation and desensitization kinetics, pH sensitivity, cation permeability, and binding to allosteric modulators. CHRNA4 forms heteropentameric neuronal acetylcholine receptors with CHRNB2 and CHRNB4, as well as CHRNA5 and CHRNB3 as accesory subunits. Is the most abundant nAChR subtype expressed in the central nervous system. Found in two major stoichiometric forms,(CHRNA4)3:(CHRNB2)2 and (CHRNA4)2:(CHRNB2)3, the two stoichiometric forms differ in their unitary conductance, calcium permeability, ACh sensitivity and potentiation by divalent cation. Involved in the modulation of calcium-dependent signaling pathways, influences the release of neurotransmitters, including dopamine, glutamate and GABA. The chain is Neuronal acetylcholine receptor subunit alpha-4 (Chrna4) from Rattus norvegicus (Rat).